Consider the following 556-residue polypeptide: 2-succinyl-5-enolpyruvyl-6-hydroxy-3-cyclohexene-1-carboxylate synthase (556 aa).

This sequence belongs to the TPP enzyme family. MenD subfamily. In terms of assembly, homodimer. Mg(2+) is required as a cofactor. Requires Mn(2+) as cofactor. The cofactor is thiamine diphosphate.

The catalysed reaction is isochorismate + 2-oxoglutarate + H(+) = 5-enolpyruvoyl-6-hydroxy-2-succinyl-cyclohex-3-ene-1-carboxylate + CO2. It participates in quinol/quinone metabolism; 1,4-dihydroxy-2-naphthoate biosynthesis; 1,4-dihydroxy-2-naphthoate from chorismate: step 2/7. Its pathway is quinol/quinone metabolism; menaquinone biosynthesis. Functionally, catalyzes the thiamine diphosphate-dependent decarboxylation of 2-oxoglutarate and the subsequent addition of the resulting succinic semialdehyde-thiamine pyrophosphate anion to isochorismate to yield 2-succinyl-5-enolpyruvyl-6-hydroxy-3-cyclohexene-1-carboxylate (SEPHCHC). This chain is 2-succinyl-5-enolpyruvyl-6-hydroxy-3-cyclohexene-1-carboxylate synthase, found in Escherichia fergusonii (strain ATCC 35469 / DSM 13698 / CCUG 18766 / IAM 14443 / JCM 21226 / LMG 7866 / NBRC 102419 / NCTC 12128 / CDC 0568-73).